We begin with the raw amino-acid sequence, 344 residues long: Ferrochelatase (344 aa).

H190 and E270 together coordinate Fe cation.

The protein belongs to the ferrochelatase family.

Its subcellular location is the cytoplasm. The catalysed reaction is heme b + 2 H(+) = protoporphyrin IX + Fe(2+). It participates in porphyrin-containing compound metabolism; protoheme biosynthesis; protoheme from protoporphyrin-IX: step 1/1. In terms of biological role, catalyzes the ferrous insertion into protoporphyrin IX. In Rickettsia felis (strain ATCC VR-1525 / URRWXCal2) (Rickettsia azadi), this protein is Ferrochelatase.